Here is a 362-residue protein sequence, read N- to C-terminus: Heme A synthase (362 aa).

5 helical membrane passes run 15–35, 104–124, 129–149, 161–181, and 200–220; these read VRIW…VGGA, VIGI…AIAP, ALWA…WMVA, VRLA…VWTL, and AIAL…VAGL. His264 lines the heme pocket. A run of 3 helical transmembrane segments spans residues 266–285, 293–313, and 316–336; these read MMAY…ALRA, GALW…LTLL, and VPIG…TLAV. A heme-binding site is contributed by His324.

It belongs to the COX15/CtaA family. Type 2 subfamily. As to quaternary structure, interacts with CtaB. The cofactor is heme b.

Its subcellular location is the cell membrane. The catalysed reaction is Fe(II)-heme o + 2 A + H2O = Fe(II)-heme a + 2 AH2. It functions in the pathway porphyrin-containing compound metabolism; heme A biosynthesis; heme A from heme O: step 1/1. Its function is as follows. Catalyzes the conversion of heme O to heme A by two successive hydroxylations of the methyl group at C8. The first hydroxylation forms heme I, the second hydroxylation results in an unstable dihydroxymethyl group, which spontaneously dehydrates, resulting in the formyl group of heme A. The protein is Heme A synthase of Rhodopseudomonas palustris (strain BisB5).